The following is a 105-amino-acid chain: uncharacterized protein (105 aa).

Positions 1 to 27 are disordered; it reads MSLKSWHPQSKTKRVGASEGNPQWGSG.

This is an uncharacterized protein from Homo sapiens (Human).